The sequence spans 271 residues: HTH-type transcriptional repressor AllR (271 aa).

Residues 21–83 (AQALERGIAI…SQLGWWHIGL (63 aa)) form the HTH iclR-type domain. The segment at residues 43-62 (VSDISLNLDLPLSTTFRLLK) is a DNA-binding region (H-T-H motif). One can recognise an IclR-ED domain in the interval 98–267 (VLSVAGPFMR…ARDISTALGL (170 aa)). Glyoxylate-binding positions include 154 to 156 (SGA), aspartate 207, cysteine 217, and 234 to 236 (SIS).

Functionally, negative regulator of allantoin and glyoxylate utilization operons. Binds to the gcl promoter and to the allS-allA intergenic region. The sequence is that of HTH-type transcriptional repressor AllR (allR) from Escherichia coli (strain UTI89 / UPEC).